The sequence spans 70 residues: uncharacterized protein (70 aa).

It is found in the plastid. This is an uncharacterized protein from Euglena longa (Euglenophycean alga).